Here is a 170-residue protein sequence, read N- to C-terminus: Probable Brix domain-containing ribosomal biogenesis protein (170 aa).

Positions 6 to 170 constitute a Brix domain; it reads TRIVITSSRD…IKFLKMILEA (165 aa).

Its function is as follows. Probably involved in the biogenesis of the ribosome. This chain is Probable Brix domain-containing ribosomal biogenesis protein, found in Saccharolobus solfataricus (strain ATCC 35092 / DSM 1617 / JCM 11322 / P2) (Sulfolobus solfataricus).